Reading from the N-terminus, the 235-residue chain is Large ribosomal subunit protein uL1 (235 aa).

It belongs to the universal ribosomal protein uL1 family. Part of the 50S ribosomal subunit.

Its function is as follows. Binds directly to 23S rRNA. The L1 stalk is quite mobile in the ribosome, and is involved in E site tRNA release. Protein L1 is also a translational repressor protein, it controls the translation of the L11 operon by binding to its mRNA. In Methylibium petroleiphilum (strain ATCC BAA-1232 / LMG 22953 / PM1), this protein is Large ribosomal subunit protein uL1.